A 227-amino-acid chain; its full sequence is Chaperone protein FocC (227 aa).

The N-terminal stretch at 1 to 21 (MRIWAVLASFLVFFYIPQSYA) is a signal peptide.

It belongs to the periplasmic pilus chaperone family.

It localises to the periplasm. In terms of biological role, involved in the biogenesis of the F1C fimbriae. The sequence is that of Chaperone protein FocC (focC) from Escherichia coli O6:H1 (strain CFT073 / ATCC 700928 / UPEC).